Here is a 131-residue protein sequence, read N- to C-terminus: Small ribosomal subunit protein uS11 (131 aa).

The protein belongs to the universal ribosomal protein uS11 family. In terms of assembly, part of the 30S ribosomal subunit. Interacts with proteins S7 and S18. Binds to IF-3.

Functionally, located on the platform of the 30S subunit, it bridges several disparate RNA helices of the 16S rRNA. Forms part of the Shine-Dalgarno cleft in the 70S ribosome. In Exiguobacterium sp. (strain ATCC BAA-1283 / AT1b), this protein is Small ribosomal subunit protein uS11.